Consider the following 169-residue polypeptide: Peptide deformylase (169 aa).

2 residues coordinate Fe cation: C91 and H133. E134 is a catalytic residue. Residue H137 participates in Fe cation binding.

Belongs to the polypeptide deformylase family. It depends on Fe(2+) as a cofactor.

It catalyses the reaction N-terminal N-formyl-L-methionyl-[peptide] + H2O = N-terminal L-methionyl-[peptide] + formate. Its function is as follows. Removes the formyl group from the N-terminal Met of newly synthesized proteins. Requires at least a dipeptide for an efficient rate of reaction. N-terminal L-methionine is a prerequisite for activity but the enzyme has broad specificity at other positions. The polypeptide is Peptide deformylase (Salmonella arizonae (strain ATCC BAA-731 / CDC346-86 / RSK2980)).